The sequence spans 652 residues: Phosphomethylpyrimidine synthase (652 aa).

Disordered stretches follow at residues 1 to 45 and 118 to 166; these read MVSR…SVSA and QRGD…LDGR. Positions 8-45 are enriched in low complexity; the sequence is SSSSTSKAVTSSPSTSSLSSAASSPSVSSSSSSSSVSA. A compositionally biased stretch (gly residues) spans 134-162; sequence GASGPGTLGSGTPGSGTPGSGPLGLGGTD. Substrate contacts are provided by residues Asn-245, Met-274, Tyr-303, His-339, 359–361, 400–403, and Glu-439; these read SRG and DGLR. His-443 contributes to the Zn(2+) binding site. Tyr-466 is a substrate binding site. His-507 contacts Zn(2+). Residues Cys-587, Cys-590, and Cys-595 each contribute to the [4Fe-4S] cluster site.

Belongs to the ThiC family. Requires [4Fe-4S] cluster as cofactor.

It catalyses the reaction 5-amino-1-(5-phospho-beta-D-ribosyl)imidazole + S-adenosyl-L-methionine = 4-amino-2-methyl-5-(phosphooxymethyl)pyrimidine + CO + 5'-deoxyadenosine + formate + L-methionine + 3 H(+). It participates in cofactor biosynthesis; thiamine diphosphate biosynthesis. Catalyzes the synthesis of the hydroxymethylpyrimidine phosphate (HMP-P) moiety of thiamine from aminoimidazole ribotide (AIR) in a radical S-adenosyl-L-methionine (SAM)-dependent reaction. The chain is Phosphomethylpyrimidine synthase from Frankia casuarinae (strain DSM 45818 / CECT 9043 / HFP020203 / CcI3).